The following is a 425-amino-acid chain: Aspyridones cluster regulator (425 aa).

Positions 100 to 127 form a DNA-binding region, zn(2)-C6 fungal-type; it reads CVDCRASKTRCTGEPEGCKRCTFRKRPC. The segment at 132–159 is disordered; the sequence is LRRSNTTQHGEQIEASSSTFTMSDEQGS. Residues 133 to 157 are compositionally biased toward polar residues; that stretch reads RRSNTTQHGEQIEASSSTFTMSDEQ.

The protein localises to the nucleus. Its function is as follows. Transcription factor involved in regulation of gene cluster that mediates the biosynthesis of aphidicolin. This chain is Aspyridones cluster regulator (TF), found in Neocamarosporium betae (Beet black rot fungus).